The chain runs to 182 residues: uncharacterized protein (182 aa).

To M.tuberculosis Rv2313c.

This is an uncharacterized protein from Escherichia coli (strain K12).